Here is a 2288-residue protein sequence, read N- to C-terminus: Protein Ycf2 (2288 aa).

1629–1636 serves as a coordination point for ATP; that stretch reads GSIGTGRS.

This sequence belongs to the Ycf2 family.

The protein localises to the plastid. It localises to the chloroplast stroma. Functionally, probable ATPase of unknown function. Its presence in a non-photosynthetic plant (Epifagus virginiana) and experiments in tobacco indicate that it has an essential function which is probably not related to photosynthesis. This Phaseolus vulgaris (Kidney bean) protein is Protein Ycf2.